Reading from the N-terminus, the 273-residue chain is Phosphate import ATP-binding protein PstB (273 aa).

Positions 1-20 (MTTVSTAAASGPAVPPPRID) are disordered. Residues 27 to 268 (VAARNLNFYY…PSDRRTQDYI (242 aa)) form the ABC transporter domain. 59-66 (GPSGCGKS) is an ATP binding site.

Belongs to the ABC transporter superfamily. Phosphate importer (TC 3.A.1.7) family. The complex is composed of two ATP-binding proteins (PstB), two transmembrane proteins (PstC and PstA) and a solute-binding protein (PstS).

Its subcellular location is the cell inner membrane. The catalysed reaction is phosphate(out) + ATP + H2O = ADP + 2 phosphate(in) + H(+). In terms of biological role, part of the ABC transporter complex PstSACB involved in phosphate import. Responsible for energy coupling to the transport system. This is Phosphate import ATP-binding protein PstB from Nitrobacter winogradskyi (strain ATCC 25391 / DSM 10237 / CIP 104748 / NCIMB 11846 / Nb-255).